The chain runs to 314 residues: Acetyl-coenzyme A carboxylase carboxyl transferase subunit beta (314 aa).

Positions 25 to 294 constitute a CoA carboxyltransferase N-terminal domain; that stretch reads VWTKCDSCSQ…PGTKPIVAEF (270 aa). Cys-29, Cys-32, Cys-48, and Cys-51 together coordinate Zn(2+). The C4-type zinc-finger motif lies at 29 to 51; it reads CDSCSQVLYRAELERNLEVCPKC.

It belongs to the AccD/PCCB family. As to quaternary structure, acetyl-CoA carboxylase is a heterohexamer composed of biotin carboxyl carrier protein (AccB), biotin carboxylase (AccC) and two subunits each of ACCase subunit alpha (AccA) and ACCase subunit beta (AccD). Zn(2+) serves as cofactor.

It is found in the cytoplasm. The catalysed reaction is N(6)-carboxybiotinyl-L-lysyl-[protein] + acetyl-CoA = N(6)-biotinyl-L-lysyl-[protein] + malonyl-CoA. It participates in lipid metabolism; malonyl-CoA biosynthesis; malonyl-CoA from acetyl-CoA: step 1/1. Functionally, component of the acetyl coenzyme A carboxylase (ACC) complex. Biotin carboxylase (BC) catalyzes the carboxylation of biotin on its carrier protein (BCCP) and then the CO(2) group is transferred by the transcarboxylase to acetyl-CoA to form malonyl-CoA. The sequence is that of Acetyl-coenzyme A carboxylase carboxyl transferase subunit beta from Photorhabdus laumondii subsp. laumondii (strain DSM 15139 / CIP 105565 / TT01) (Photorhabdus luminescens subsp. laumondii).